The primary structure comprises 488 residues: Glutamate--tRNA ligase (488 aa).

Residues 11-21 (PSPTGQIHIGN) carry the 'HIGH' region motif. Residues cysteine 108, cysteine 110, cysteine 135, and aspartate 137 each contribute to the Zn(2+) site. The 'KMSKS' region motif lies at 252-256 (KLSKR). Lysine 255 provides a ligand contact to ATP.

The protein belongs to the class-I aminoacyl-tRNA synthetase family. Glutamate--tRNA ligase type 1 subfamily. In terms of assembly, monomer. Requires Zn(2+) as cofactor.

It is found in the cytoplasm. It catalyses the reaction tRNA(Glu) + L-glutamate + ATP = L-glutamyl-tRNA(Glu) + AMP + diphosphate. Functionally, catalyzes the attachment of glutamate to tRNA(Glu) in a two-step reaction: glutamate is first activated by ATP to form Glu-AMP and then transferred to the acceptor end of tRNA(Glu). This is Glutamate--tRNA ligase from Natranaerobius thermophilus (strain ATCC BAA-1301 / DSM 18059 / JW/NM-WN-LF).